The sequence spans 727 residues: Alpha-1,3-galactosidase A (727 aa).

The segment at 220–241 (ATNRTWRTSNPVFPERHEDHRP) is disordered. Residues 221 to 230 (TNRTWRTSNP) show a composition bias toward polar residues. PbH1 repeat units follow at residues 336–358 (KGTVRITNSVFDNPQDDPINIHG), 461–483 (TPTVEITGNTFQAVPTRGILVTT), 484–506 (RRPVRIENNRFDGMSMASIYISS), 517–538 (VRNVTIRGNVFDRPASPVIFFD), 551–572 (HRNVLIEDNDFNLTGGTILSGR), and 574–603 (VGGLTFRDNRVERYPHLRLTGPSRALRVGD).

Belongs to the glycosyl hydrolase 110 family. A subfamily.

The catalysed reaction is Hydrolysis of terminal, non-reducing branched (1-&gt;3)-alpha-D-galactosidic residues, producing free D-galactose.. It catalyses the reaction Hydrolysis of terminal, non-reducing alpha-D-galactose residues in alpha-D-galactosides, including galactose oligosaccharides, galactomannans and galactolipids.. Functionally, alpha-galactosidase that specifically removes branched alpha-1,3-linked galactose residues present in blood group B antigens. Has no activity toward linear alpha-1,3-linked galactose residues. The sequence is that of Alpha-1,3-galactosidase A (glaA) from Peterkaempfera griseoplana (Streptacidiphilus griseoplanus).